We begin with the raw amino-acid sequence, 510 residues long: UDP-N-acetylmuramate--L-alanine ligase (510 aa).

Residues 1-25 are disordered; the sequence is MVETVGGKDAVAPAPARSPSPPAKN. 140–146 contributes to the ATP binding site; sequence GTHGKTT.

The protein belongs to the MurCDEF family.

The protein resides in the cytoplasm. It carries out the reaction UDP-N-acetyl-alpha-D-muramate + L-alanine + ATP = UDP-N-acetyl-alpha-D-muramoyl-L-alanine + ADP + phosphate + H(+). The protein operates within cell wall biogenesis; peptidoglycan biosynthesis. In terms of biological role, cell wall formation. This Synechococcus sp. (strain JA-3-3Ab) (Cyanobacteria bacterium Yellowstone A-Prime) protein is UDP-N-acetylmuramate--L-alanine ligase.